Here is a 296-residue protein sequence, read N- to C-terminus: Mycothiol acetyltransferase (296 aa).

2 consecutive N-acetyltransferase domains span residues 1–148 (MTEW…IRVD) and 151–296 (VTVR…YGRA). Glutamate 34 provides a ligand contact to 1D-myo-inositol 2-(L-cysteinylamino)-2-deoxy-alpha-D-glucopyranoside. Acetyl-CoA-binding positions include 79–81 (LVV) and 87–92 (RRGIGS). The 1D-myo-inositol 2-(L-cysteinylamino)-2-deoxy-alpha-D-glucopyranoside site is built by glutamate 178, lysine 219, and glutamate 229. Residues 233-235 (VGV) and 240-246 (QGRGLGH) each bind acetyl-CoA. Tyrosine 267 serves as a coordination point for 1D-myo-inositol 2-(L-cysteinylamino)-2-deoxy-alpha-D-glucopyranoside. 272–277 (NQAALR) provides a ligand contact to acetyl-CoA.

This sequence belongs to the acetyltransferase family. MshD subfamily. Monomer.

The catalysed reaction is 1D-myo-inositol 2-(L-cysteinylamino)-2-deoxy-alpha-D-glucopyranoside + acetyl-CoA = mycothiol + CoA + H(+). Catalyzes the transfer of acetyl from acetyl-CoA to desacetylmycothiol (Cys-GlcN-Ins) to form mycothiol. This chain is Mycothiol acetyltransferase, found in Mycobacteroides abscessus (strain ATCC 19977 / DSM 44196 / CCUG 20993 / CIP 104536 / JCM 13569 / NCTC 13031 / TMC 1543 / L948) (Mycobacterium abscessus).